The sequence spans 418 residues: Putative ion-transport protein YfeO (418 aa).

A run of 12 helical transmembrane segments spans residues 10 to 30, 54 to 74, 99 to 119, 120 to 140, 149 to 169, 186 to 206, 223 to 243, 258 to 278, 300 to 320, 322 to 342, 343 to 363, and 371 to 391; these read LLLS…LIVV, DSPF…GLVI, ALPG…SLGP, EHPI…RLLP, ILAS…AALI, LFAP…FFHP, ILSG…AVWC, VLML…AGPV, DYFL…ASGF, GGRI…LHEH, VPAV…VLVV, and LFMA…CIVM.

The protein belongs to the chloride channel (TC 2.A.49) family.

It is found in the cell membrane. The chain is Putative ion-transport protein YfeO from Escherichia coli (strain SMS-3-5 / SECEC).